Here is a 342-residue protein sequence, read N- to C-terminus: Cytosolic Fe-S cluster assembly factor NBP35 (342 aa).

Residues 1 to 45 (MGPSLETPEPVEDVLANPLKQKPQLVAPEPEHCPGPESEQAGTAD) form a disordered region. [4Fe-4S] cluster contacts are provided by C33, C47, C50, and C56. 86–93 (GKGGVGKS) is an ATP binding site. Residues C259 and C262 each coordinate [4Fe-4S] cluster.

Belongs to the Mrp/NBP35 ATP-binding proteins family. NUBP1/NBP35 subfamily. Heterotetramer of 2 NBP35 and 2 CFD1 chains. It depends on [4Fe-4S] cluster as a cofactor.

The protein resides in the cytoplasm. Functionally, component of the cytosolic iron-sulfur (Fe/S) protein assembly (CIA) machinery. Required for maturation of extramitochondrial Fe-S proteins. The NBP35-CFD1 heterotetramer forms a Fe-S scaffold complex, mediating the de novo assembly of an Fe-S cluster and its transfer to target apoproteins. The chain is Cytosolic Fe-S cluster assembly factor NBP35 from Chaetomium globosum (strain ATCC 6205 / CBS 148.51 / DSM 1962 / NBRC 6347 / NRRL 1970) (Soil fungus).